The primary structure comprises 56 residues: Small ribosomal subunit protein uS14 (56 aa).

Cysteine 21, cysteine 24, cysteine 39, and cysteine 42 together coordinate Zn(2+).

It belongs to the universal ribosomal protein uS14 family. It depends on Zn(2+) as a cofactor.

The chain is Small ribosomal subunit protein uS14 (RPS29) from Debaryomyces hansenii (strain ATCC 36239 / CBS 767 / BCRC 21394 / JCM 1990 / NBRC 0083 / IGC 2968) (Yeast).